Here is a 614-residue protein sequence, read N- to C-terminus: Membrane protein insertase YidC (614 aa).

Residues 6 to 26 (IVLLIIFSTSLLFLWDAWIKE) form a helical membrane-spanning segment. Composition is skewed to polar residues over residues 34-48 (PAIT…STQS) and 60-70 (ELTSSQASPDT). A disordered region spans residues 34–87 (PAITQADSSAGSTQSRNDDSLPVPGSELTSSQASPDTNGIPASGGNGDSVTPRL). 4 consecutive transmembrane segments (helical) span residues 380 to 400 (WGVA…PLSA), 450 to 470 (FPIL…LAAV), 484 to 504 (LSSP…MFVQ), and 524 to 544 (PVAF…YSLV). The interval 562 to 614 (TAPSKDTPEPPVSKQVNSSENPETTANSPADSPKQPQTPANNPRKMYKRTRKK) is disordered. Residues 575–602 (KQVNSSENPETTANSPADSPKQPQTPAN) are compositionally biased toward polar residues.

It belongs to the OXA1/ALB3/YidC family. Type 1 subfamily. As to quaternary structure, interacts with the Sec translocase complex via SecD. Specifically interacts with transmembrane segments of nascent integral membrane proteins during membrane integration.

Its subcellular location is the cell inner membrane. Its function is as follows. Required for the insertion and/or proper folding and/or complex formation of integral membrane proteins into the membrane. Involved in integration of membrane proteins that insert both dependently and independently of the Sec translocase complex, as well as at least some lipoproteins. Aids folding of multispanning membrane proteins. This chain is Membrane protein insertase YidC, found in Nitrosomonas europaea (strain ATCC 19718 / CIP 103999 / KCTC 2705 / NBRC 14298).